A 140-amino-acid polypeptide reads, in one-letter code: Putative nickel-responsive regulator 2 (140 aa).

Ni(2+) is bound by residues His-81, His-92, His-94, and Cys-100.

It belongs to the transcriptional regulatory CopG/NikR family. Ni(2+) is required as a cofactor.

In terms of biological role, transcriptional regulator. The protein is Putative nickel-responsive regulator 2 of Methanosarcina acetivorans (strain ATCC 35395 / DSM 2834 / JCM 12185 / C2A).